Consider the following 132-residue polypeptide: Small ribosomal subunit protein uS8 (132 aa).

The protein belongs to the universal ribosomal protein uS8 family. In terms of assembly, part of the 30S ribosomal subunit. Contacts proteins S5 and S12.

Functionally, one of the primary rRNA binding proteins, it binds directly to 16S rRNA central domain where it helps coordinate assembly of the platform of the 30S subunit. The sequence is that of Small ribosomal subunit protein uS8 from Streptomyces griseus subsp. griseus (strain JCM 4626 / CBS 651.72 / NBRC 13350 / KCC S-0626 / ISP 5235).